A 172-amino-acid polypeptide reads, in one-letter code: Putative Dresden prostate carcinoma protein 2 (172 aa).

Residues 40 to 61 (QCEEEEAMTPRPTKARAPLPSA) form a disordered region.

Very high expression in prostate and prostate cancer. Faint expression in other tissues.

The sequence is that of Putative Dresden prostate carcinoma protein 2 (HMGN2P46) from Homo sapiens (Human).